The chain runs to 342 residues: uncharacterized protein (342 aa).

This sequence belongs to the proline racemase family.

This is an uncharacterized protein from Brucella canis (strain ATCC 23365 / NCTC 10854 / RM-666).